The chain runs to 161 residues: 2-C-methyl-D-erythritol 2,4-cyclodiphosphate synthase (161 aa).

2 residues coordinate a divalent metal cation: Asp10 and His12. 4-CDP-2-C-methyl-D-erythritol 2-phosphate is bound by residues 10–12 (DVH) and 36–37 (HS). Residue His44 participates in a divalent metal cation binding. 4-CDP-2-C-methyl-D-erythritol 2-phosphate contacts are provided by residues 58 to 60 (DIG), 63 to 67 (FPDTD), 102 to 108 (AQVPKMA), 134 to 137 (TTTE), Phe141, and Arg144.

The protein belongs to the IspF family. In terms of assembly, homotrimer. It depends on a divalent metal cation as a cofactor.

It catalyses the reaction 4-CDP-2-C-methyl-D-erythritol 2-phosphate = 2-C-methyl-D-erythritol 2,4-cyclic diphosphate + CMP. Its pathway is isoprenoid biosynthesis; isopentenyl diphosphate biosynthesis via DXP pathway; isopentenyl diphosphate from 1-deoxy-D-xylulose 5-phosphate: step 4/6. Functionally, involved in the biosynthesis of isopentenyl diphosphate (IPP) and dimethylallyl diphosphate (DMAPP), two major building blocks of isoprenoid compounds. Catalyzes the conversion of 4-diphosphocytidyl-2-C-methyl-D-erythritol 2-phosphate (CDP-ME2P) to 2-C-methyl-D-erythritol 2,4-cyclodiphosphate (ME-CPP) with a corresponding release of cytidine 5-monophosphate (CMP). The sequence is that of 2-C-methyl-D-erythritol 2,4-cyclodiphosphate synthase from Shewanella baltica (strain OS223).